A 146-amino-acid chain; its full sequence is Hut operon positive regulatory protein (146 aa).

The protein belongs to the HutP family. In terms of assembly, homohexamer.

Antiterminator that binds to cis-acting regulatory sequences on the mRNA in the presence of histidine, thereby suppressing transcription termination and activating the hut operon for histidine utilization. The sequence is that of Hut operon positive regulatory protein from Bacillus cereus (strain G9842).